The following is a 444-amino-acid chain: uncharacterized protein (444 aa).

A chloroplast-targeting transit peptide spans 1–72; that stretch reads MGFLTAAIRV…RPMWNVSFLR (72 aa). The disordered stretch occupies residues 77-107; sequence HSTPARETGDDDISKSENSSSQDGDSCTKLK. Positions 92–101 are enriched in polar residues; that stretch reads SENSSSQDGD. A CRM domain is found at 175–272; the sequence is EILTPEEHFY…KNYVQPPTEI (98 aa). Positions 292-355 form a coiled coil; the sequence is DALRAVRKYI…CLEDEQEEDE (64 aa). Disordered stretches follow at residues 344–364 and 392–426; these read EECL…ATDS and KFPA…PNFD. Residues 346-357 show a composition bias toward acidic residues; sequence CLEDEQEEDEAG. Residues 406-426 show a composition bias toward basic and acidic residues; sequence DLGKAKSEGEENDDDKSPNFD.

It localises to the plastid. The protein localises to the chloroplast. This is an uncharacterized protein from Arabidopsis thaliana (Mouse-ear cress).